A 165-amino-acid chain; its full sequence is Cytochrome c-type biogenesis protein CcmE (165 aa).

Topologically, residues 1–7 are cytoplasmic; that stretch reads MTRKQKR. A helical; Signal-anchor for type II membrane protein membrane pass occupies residues 8-28; sequence LAVIAGGMGFIIAAVLLVMFA. The Periplasmic segment spans residues 29–165; that stretch reads FSQSVAYFYM…GQGQEAKATR (137 aa). 2 residues coordinate heme: His124 and Tyr128. Positions 144 to 154 are enriched in low complexity; the sequence is QDGQGAQSQAG. A disordered region spans residues 144–165; the sequence is QDGQGAQSQAGQGQGQEAKATR.

The protein belongs to the CcmE/CycJ family.

Its subcellular location is the cell inner membrane. Heme chaperone required for the biogenesis of c-type cytochromes. Transiently binds heme delivered by CcmC and transfers the heme to apo-cytochromes in a process facilitated by CcmF and CcmH. This chain is Cytochrome c-type biogenesis protein CcmE, found in Rhizobium etli (strain CIAT 652).